Reading from the N-terminus, the 409-residue chain is Multifunctional CCA protein (409 aa).

Residues G8 and R11 each contribute to the ATP site. Positions 8 and 11 each coordinate CTP. Mg(2+)-binding residues include E21 and D23. 3 residues coordinate ATP: R91, R137, and R140. The CTP site is built by R91, R137, and R140. The 102-residue stretch at T228 to F329 folds into the HD domain.

The protein belongs to the tRNA nucleotidyltransferase/poly(A) polymerase family. Bacterial CCA-adding enzyme type 1 subfamily. In terms of assembly, monomer. Can also form homodimers and oligomers. Requires Mg(2+) as cofactor. It depends on Ni(2+) as a cofactor.

The catalysed reaction is a tRNA precursor + 2 CTP + ATP = a tRNA with a 3' CCA end + 3 diphosphate. It carries out the reaction a tRNA with a 3' CCA end + 2 CTP + ATP = a tRNA with a 3' CCACCA end + 3 diphosphate. Its function is as follows. Catalyzes the addition and repair of the essential 3'-terminal CCA sequence in tRNAs without using a nucleic acid template. Adds these three nucleotides in the order of C, C, and A to the tRNA nucleotide-73, using CTP and ATP as substrates and producing inorganic pyrophosphate. tRNA 3'-terminal CCA addition is required both for tRNA processing and repair. Also involved in tRNA surveillance by mediating tandem CCA addition to generate a CCACCA at the 3' terminus of unstable tRNAs. While stable tRNAs receive only 3'-terminal CCA, unstable tRNAs are marked with CCACCA and rapidly degraded. This is Multifunctional CCA protein from Thioalkalivibrio sulfidiphilus (strain HL-EbGR7).